The chain runs to 313 residues: Homoserine O-succinyltransferase (313 aa).

Catalysis depends on C142, which acts as the Acyl-thioester intermediate. Residues K163 and S192 each contribute to the substrate site. The Proton acceptor role is filled by H235. Residue E237 is part of the active site. R249 provides a ligand contact to substrate.

This sequence belongs to the MetA family.

It is found in the cytoplasm. The catalysed reaction is L-homoserine + succinyl-CoA = O-succinyl-L-homoserine + CoA. Its pathway is amino-acid biosynthesis; L-methionine biosynthesis via de novo pathway; O-succinyl-L-homoserine from L-homoserine: step 1/1. Its function is as follows. Transfers a succinyl group from succinyl-CoA to L-homoserine, forming succinyl-L-homoserine. The sequence is that of Homoserine O-succinyltransferase from Vibrio campbellii (strain ATCC BAA-1116).